The following is an 846-amino-acid chain: Putative transcriptional regulator tpeD (846 aa).

A BED-type; degenerate zinc finger spans residues 104–166; it reads KHQSECWQHF…NCRKSVPVSK (63 aa). The segment at 734–846 is disordered; sequence RAREERDAQQ…RDEDFVYETP (113 aa). The segment covering 756–769 has biased composition (acidic residues); sequence PISDSEEAESEDES. A compositionally biased stretch (low complexity) spans 773 to 786; the sequence is PQSPQASQARSQRS. Acidic residues predominate over residues 797–809; the sequence is PLIELDGNEEDEV.

The protein resides in the nucleus. Putative transcriptional regulator; part of the gene cluster that mediates the biosynthesis of polyesters containing 2,4-dihydroxy-6-(2-hydroxypropyl)benzoate and 3-hydroxybutyrate moieties, such as talapolyester G, 15G256beta and 15G256beta-2; as well as to oxidized derivatives such as 15G256alpha. This chain is Putative transcriptional regulator tpeD, found in Talaromyces stipitatus (strain ATCC 10500 / CBS 375.48 / QM 6759 / NRRL 1006) (Penicillium stipitatum).